Reading from the N-terminus, the 186-residue chain is Ribonuclease M5 (186 aa).

A Toprim domain is found at 4–94 (KEIIVVEGRD…AKPKNKRGIG (91 aa)). Mg(2+)-binding residues include Glu10, Asp56, and Asp58.

It belongs to the ribonuclease M5 family. In terms of assembly, requires ribosomal protein L18 (rplR) for catalysis; it can be replaced by 30% dimethylsulfoxide suggesting L18 functions as an rRNA folding chaperone. The cofactor is Mg(2+). Requires Mn(2+) as cofactor. It depends on Ca(2+) as a cofactor.

It is found in the cytoplasm. It carries out the reaction Endonucleolytic cleavage of RNA, removing 21 and 42 nucleotides, respectively, from the 5'- and 3'-termini of a 5S-rRNA precursor.. Required for correct processing of both the 5' and 3' ends of 5S rRNA precursor. Cleaves both sides of a double-stranded region yielding mature 5S rRNA in one step. Releases 5'-phosphoryl and 3'-hydroxy termini. This is Ribonuclease M5 from Bacillus subtilis (strain 168).